The sequence spans 213 residues: Protein GrpE (213 aa).

The segment at 1 to 61 (MEQGEKQVME…AEKAPTAEEL (61 aa)) is disordered. A compositionally biased stretch (acidic residues) spans 13 to 35 (TYDEPEREQPIEEEAAPQPEEES).

It belongs to the GrpE family. In terms of assembly, homodimer.

Its subcellular location is the cytoplasm. Its function is as follows. Participates actively in the response to hyperosmotic and heat shock by preventing the aggregation of stress-denatured proteins, in association with DnaK and GrpE. It is the nucleotide exchange factor for DnaK and may function as a thermosensor. Unfolded proteins bind initially to DnaJ; upon interaction with the DnaJ-bound protein, DnaK hydrolyzes its bound ATP, resulting in the formation of a stable complex. GrpE releases ADP from DnaK; ATP binding to DnaK triggers the release of the substrate protein, thus completing the reaction cycle. Several rounds of ATP-dependent interactions between DnaJ, DnaK and GrpE are required for fully efficient folding. In Geobacillus kaustophilus (strain HTA426), this protein is Protein GrpE.